A 309-amino-acid chain; its full sequence is MELQFLGTGAGQPAKHRNVSSLVLKLLDEINEVWMFDCGEGTQRQILETTIKPRKIKKIFITHLHGDHIFGLPGFLSSRAFQASEEQTDLEIYGPVGIKSYVTNSIRISGSKLPYQIHYHEFDDTSMGKILETDKFIVYAERLAHTIFCMGYRVVQKDLEGTLDAEALRAVGVPFGPLFGKVKNGQDIELEDGTKIFAKDFISEPRKGKIITIIGDTRKTSASVRLAKDADVLVHESTYGKGDERMARNHGHSTNMQAAQIARDAGAKRLLLNHVSARFLGRDCRQMEKDAATIFENVKVVRDLEEVII.

Residues histidine 63, histidine 65, aspartate 67, histidine 68, histidine 145, aspartate 216, and histidine 274 each contribute to the Zn(2+) site. Catalysis depends on aspartate 67, which acts as the Proton acceptor.

Belongs to the RNase Z family. In terms of assembly, homodimer. Zn(2+) is required as a cofactor.

The enzyme catalyses Endonucleolytic cleavage of RNA, removing extra 3' nucleotides from tRNA precursor, generating 3' termini of tRNAs. A 3'-hydroxy group is left at the tRNA terminus and a 5'-phosphoryl group is left at the trailer molecule.. In terms of biological role, zinc phosphodiesterase, which displays some tRNA 3'-processing endonuclease activity. Probably involved in tRNA maturation, by removing a 3'-trailer from precursor tRNA. The chain is Ribonuclease Z from Streptococcus equi subsp. equi (strain 4047).